The following is a 280-amino-acid chain: 4-diphosphocytidyl-2-C-methyl-D-erythritol kinase (280 aa).

The active site involves K8. 91-101 lines the ATP pocket; the sequence is PVSAGLAGGST. D133 is an active-site residue.

This sequence belongs to the GHMP kinase family. IspE subfamily.

The enzyme catalyses 4-CDP-2-C-methyl-D-erythritol + ATP = 4-CDP-2-C-methyl-D-erythritol 2-phosphate + ADP + H(+). Its pathway is isoprenoid biosynthesis; isopentenyl diphosphate biosynthesis via DXP pathway; isopentenyl diphosphate from 1-deoxy-D-xylulose 5-phosphate: step 3/6. In terms of biological role, catalyzes the phosphorylation of the position 2 hydroxy group of 4-diphosphocytidyl-2C-methyl-D-erythritol. The sequence is that of 4-diphosphocytidyl-2-C-methyl-D-erythritol kinase from Clostridium botulinum (strain Alaska E43 / Type E3).